The chain runs to 364 residues: GTPase Obg (364 aa).

Positions 1–161 constitute an Obg domain; the sequence is MRFVDEVTIS…KYLRLELKIL (161 aa). The OBG-type G domain maps to 162–334; sequence ADAGIIGLPN…LVDAIWKLQS (173 aa). GTP contacts are provided by residues 168–175, 193–197, 217–220, 287–290, and 315–317; these read GLPNAGKS, FTTLN, DIPG, NKID, and SAE. The Mg(2+) site is built by Ser-175 and Thr-195.

Belongs to the TRAFAC class OBG-HflX-like GTPase superfamily. OBG GTPase family. Monomer. Mg(2+) is required as a cofactor.

It localises to the cytoplasm. An essential GTPase which binds GTP, GDP and possibly (p)ppGpp with moderate affinity, with high nucleotide exchange rates and a fairly low GTP hydrolysis rate. Plays a role in control of the cell cycle, stress response, ribosome biogenesis and in those bacteria that undergo differentiation, in morphogenesis control. The protein is GTPase Obg of Lawsonia intracellularis (strain PHE/MN1-00).